A 661-amino-acid polypeptide reads, in one-letter code: Methyl-accepting chemotaxis protein McpA (661 aa).

The Cytoplasmic segment spans residues 1-16 (MKKILQLIKQRSITRK). Residues 17 to 37 (LLVSFLSILIIPVVILAIFAY) traverse the membrane as a helical segment. Residues 38-281 (QSASSSLDRQ…IHEAAQPVLH (244 aa)) lie on the Extracellular side of the membrane. The Cache domain occupies 152-228 (ITDPYKTAST…QSGTELKGDW (77 aa)). Residues 282-302 (LALIVLAAAIIIGIIVMTLII) form a helical membrane-spanning segment. The HAMP domain occupies 303-355 (RSITTPLKQLVGSSKRISEGDLTETIDIRSKDELGELGKSFNNMASSLRSLIH). Residues 303–661 (RSITTPLKQL…RDMTKRFKIE (359 aa)) are Cytoplasmic-facing. Glutamate methyl ester (Glu) is present on Glu370. One can recognise a Methyl-accepting transducer domain in the interval 374 to 610 (SAAQTSKATE…EVSGASEHIA (237 aa)). Deamidated glutamine is present on residues Gln593 and Gln594. Gln594 carries the post-translational modification Glutamate methyl ester (Gln). Glutamate methyl ester (Glu) occurs at positions 629 and 636.

This sequence belongs to the methyl-accepting chemotaxis (MCP) protein family. Interacts with FloT. In terms of processing, deamidated by CheD on Gln-593 and Gln-594, producing glutamate residues. The glutamate residues are then methylated. Other additional sites are deamidated and methylated as well.

It localises to the cell membrane. Its subcellular location is the membrane raft. Functionally, chemotactic-signal transducers respond to changes in the concentration of attractants and repellents in the environment, transduce a signal from the outside to the inside of the cell, and facilitate sensory adaptation through the variation of the level of methylation. All amino acids serve as attractants in B.subtilis, they appear to cause an increase in the turnover methyl groups, leading to methylation of an unidentified acceptor, while repellents have been shown to cause a decrease in methyl group turnover. The methyl groups are added by a methyltransferase and removed by a methylesterase. McpA is required for taxis towards glucose and alpha-methylglucoside. The sequence is that of Methyl-accepting chemotaxis protein McpA (mcpA) from Bacillus subtilis (strain 168).